Reading from the N-terminus, the 155-residue chain is Endoribonuclease YbeY (155 aa).

3 residues coordinate Zn(2+): His114, His118, and His124.

The protein belongs to the endoribonuclease YbeY family. Zn(2+) serves as cofactor.

The protein localises to the cytoplasm. Functionally, single strand-specific metallo-endoribonuclease involved in late-stage 70S ribosome quality control and in maturation of the 3' terminus of the 16S rRNA. In Tolumonas auensis (strain DSM 9187 / NBRC 110442 / TA 4), this protein is Endoribonuclease YbeY.